The primary structure comprises 401 residues: MALIIQKFGGTSVANIDRIKKIVPIIKTEIAKNNQVIVVVSAMAGVTNQLVTLCNELSSLNNISQFAEYDVALSSGEIVTASLLALALQEEDIKARSFLAWQLPMLTDNNHSKALVESITTDLLEKYLQLNTIPIIAGFQGINKSNRLTTLGRGGSDTTAALIAAAMKADRCDIYTDVEGIFTADPRIIPNAKKIKEIDFLEMLELASSGAQVLHPRAGELVMRYKIDMRVLSTFSPDTEGTLITSKDKNMENGIINSITSNKNLLKISVKSMSLSFLQVANMITQNNNHIEFMQEIKNNEEYSFITNLTDKNNLQALLTNLKDDKQIQYFTFDTEIATISLIGYGIKNDCKLLETILSKLTNDNINVHMIQLSEVKITLFINDQDTEKTIFNLYNLFKIS.

This sequence belongs to the aspartokinase family.

The catalysed reaction is L-aspartate + ATP = 4-phospho-L-aspartate + ADP. It participates in amino-acid biosynthesis; L-lysine biosynthesis via DAP pathway; (S)-tetrahydrodipicolinate from L-aspartate: step 1/4. It functions in the pathway amino-acid biosynthesis; L-methionine biosynthesis via de novo pathway; L-homoserine from L-aspartate: step 1/3. Its pathway is amino-acid biosynthesis; L-threonine biosynthesis; L-threonine from L-aspartate: step 1/5. The protein is Aspartokinase (lysC) of Rickettsia conorii (strain ATCC VR-613 / Malish 7).